Here is a 508-residue protein sequence, read N- to C-terminus: Photosystem II CP47 reaction center protein (508 aa).

6 helical membrane passes run 21-36 (SVHI…WAGS), 101-115 (IMFS…IWHW), 140-156 (GIHL…FGAF), 203-218 (IAAG…FHLS), 237-252 (VLSS…AFVV), and 457-472 (SFAL…HGAR).

The protein belongs to the PsbB/PsbC family. PsbB subfamily. PSII is composed of 1 copy each of membrane proteins PsbA, PsbB, PsbC, PsbD, PsbE, PsbF, PsbH, PsbI, PsbJ, PsbK, PsbL, PsbM, PsbT, PsbX, PsbY, PsbZ, Psb30/Ycf12, at least 3 peripheral proteins of the oxygen-evolving complex and a large number of cofactors. It forms dimeric complexes. Binds multiple chlorophylls. PSII binds additional chlorophylls, carotenoids and specific lipids. is required as a cofactor.

Its subcellular location is the plastid. It is found in the chloroplast thylakoid membrane. Functionally, one of the components of the core complex of photosystem II (PSII). It binds chlorophyll and helps catalyze the primary light-induced photochemical processes of PSII. PSII is a light-driven water:plastoquinone oxidoreductase, using light energy to abstract electrons from H(2)O, generating O(2) and a proton gradient subsequently used for ATP formation. The chain is Photosystem II CP47 reaction center protein from Ceratophyllum demersum (Rigid hornwort).